Reading from the N-terminus, the 732-residue chain is Catalase-peroxidase (732 aa).

Residues 1-20 (MDKDSKRPVVGSTVRGGMSN) form a disordered region. The tryptophyl-tyrosyl-methioninium (Trp-Tyr) (with M-246) cross-link spans 92-220 (WHSAGTYRMG…LAAVQMGLIY (129 aa)). The active-site Proton acceptor is the H93. A cross-link (tryptophyl-tyrosyl-methioninium (Tyr-Met) (with W-92)) is located at residues 220-246 (YVNPEGPDGNPDPVAAGYDVIETFARM). Position 261 (H261) interacts with heme b.

This sequence belongs to the peroxidase family. Peroxidase/catalase subfamily. As to quaternary structure, homodimer or homotetramer. The cofactor is heme b. Formation of the three residue Trp-Tyr-Met cross-link is important for the catalase, but not the peroxidase activity of the enzyme.

The enzyme catalyses H2O2 + AH2 = A + 2 H2O. It catalyses the reaction 2 H2O2 = O2 + 2 H2O. Functionally, bifunctional enzyme with both catalase and broad-spectrum peroxidase activity. The sequence is that of Catalase-peroxidase from Desulfosudis oleivorans (strain DSM 6200 / JCM 39069 / Hxd3) (Desulfococcus oleovorans).